A 332-amino-acid polypeptide reads, in one-letter code: MARDVLTLSRHVLQQFSGFTPEAQDFSALMNRIALAGKMIARRLSQAGLIEGTLGVTGSVNVQGEEQQRMDDYANRAFIRALEQTGLVCRLVSEELKTPARLPENCSLSRLALLIDPLDGSSNIDANLSVGSIFSVLHPLEDRPEADNQDLLQPGRRQLAAGYILYGPSTQLVYSVGKGVHSFTLDPSLGEFILSKSDLRIPERGSVYSLNEGYFCQWSEGIQNYVRYVHRRDGYTARYSGALVADFHRILLQGGVYLYPGTRQKPEGKLRLMYEANPLAFLAEQAGGVATTGTEAILDIVPQSLHQRVPLIIGSRKNVEEVLRCLEGSLTP.

E94, D116, L118, and D119 together coordinate Mg(2+). Substrate-binding positions include 119–122, N211, Y239, 257–259, and K269; these read DGSS and YLY. E275 is a Mg(2+) binding site.

The protein belongs to the FBPase class 1 family. Homotetramer. Requires Mg(2+) as cofactor.

The protein localises to the cytoplasm. It catalyses the reaction beta-D-fructose 1,6-bisphosphate + H2O = beta-D-fructose 6-phosphate + phosphate. It functions in the pathway carbohydrate biosynthesis; Calvin cycle. The chain is Fructose-1,6-bisphosphatase class 1 from Synechococcus sp. (strain JA-3-3Ab) (Cyanobacteria bacterium Yellowstone A-Prime).